The chain runs to 227 residues: MSKISNALGRKDGNSGYTRVVGNAELGQLLSRVQATVISNGNELERLITQRCNLIENIDVFIEDTTRGNNVQNGVYLCLKKTFKKSKKYAESVKGIEPDMLIFIVESYRVCKVIELKDGDAFDTKKSQGEKEHLEKFATLFGAKIPFVTDYYICSFNQNDKKLIMAGFKGVFSLEHILTGKELCQILGISYQEILDIRRRDTEENFAYLIAEMMKIPEVREEVKKHF.

In terms of assembly, homodimer.

The catalysed reaction is Endonucleolytic cleavage of DNA to give specific double-stranded fragments with terminal 5'-phosphates.. In terms of biological role, a P subtype restriction enzyme that recognizes the double-stranded sequence 5'-GANTC-3' and cleaves after G-1. The sequence is that of Type II restriction enzyme HhaII (hhaIIR) from Haemophilus parahaemolyticus.